The sequence spans 265 residues: MQPDLHCRTLAAHTLKHFRALSPLTHCMTNDVVQTFTANTLLALGASPAMVIDPVEARPFAAIANALLVNVGTLTASRAEAMRAAVESAYDAKTPWTLDPVAVGALEFRRRFCLDLLSLRPAAIRGNASEILALSGMALGGRGVDTTEAALAALPAAQALARQIDCIVVVTGEVDYVTNGQRTLSIPGGDPLMTRIVGTGCALSAVVAASCALPGAALDNVASACCWMKLAGQTAAERSEGPGSFIPAFLDALYHLDVEAANEEN.

Met-50 lines the substrate pocket. ATP-binding residues include Arg-125 and Thr-171. Gly-198 contributes to the substrate binding site.

Belongs to the Thz kinase family. Requires Mg(2+) as cofactor.

It carries out the reaction 5-(2-hydroxyethyl)-4-methylthiazole + ATP = 4-methyl-5-(2-phosphooxyethyl)-thiazole + ADP + H(+). The protein operates within cofactor biosynthesis; thiamine diphosphate biosynthesis; 4-methyl-5-(2-phosphoethyl)-thiazole from 5-(2-hydroxyethyl)-4-methylthiazole: step 1/1. Functionally, catalyzes the phosphorylation of the hydroxyl group of 4-methyl-5-beta-hydroxyethylthiazole (THZ). The sequence is that of Hydroxyethylthiazole kinase from Salmonella schwarzengrund (strain CVM19633).